The chain runs to 421 residues: UDP-N-acetylglucosamine 1-carboxyvinyltransferase (421 aa).

22-23 (KN) lines the phosphoenolpyruvate pocket. A UDP-N-acetyl-alpha-D-glucosamine-binding site is contributed by arginine 93. Cysteine 117 functions as the Proton donor in the catalytic mechanism. Position 117 is a 2-(S-cysteinyl)pyruvic acid O-phosphothioketal (cysteine 117). Residues 122 to 126 (RPVDL), aspartate 308, and isoleucine 330 contribute to the UDP-N-acetyl-alpha-D-glucosamine site.

Belongs to the EPSP synthase family. MurA subfamily.

The protein resides in the cytoplasm. The catalysed reaction is phosphoenolpyruvate + UDP-N-acetyl-alpha-D-glucosamine = UDP-N-acetyl-3-O-(1-carboxyvinyl)-alpha-D-glucosamine + phosphate. The protein operates within cell wall biogenesis; peptidoglycan biosynthesis. Functionally, cell wall formation. Adds enolpyruvyl to UDP-N-acetylglucosamine. This Pseudomonas fluorescens (strain SBW25) protein is UDP-N-acetylglucosamine 1-carboxyvinyltransferase.